A 146-amino-acid polypeptide reads, in one-letter code: Large ribosomal subunit protein bL21 (146 aa).

Positions 103 to 146 (DGKSPTIGPRPKKEKAVEPVEGASDDKPRRAAKKTAAKTAEDAD) are disordered. Positions 116-131 (EKAVEPVEGASDDKPR) are enriched in basic and acidic residues.

This sequence belongs to the bacterial ribosomal protein bL21 family. In terms of assembly, part of the 50S ribosomal subunit. Contacts protein L20.

In terms of biological role, this protein binds to 23S rRNA in the presence of protein L20. This chain is Large ribosomal subunit protein bL21, found in Nitrobacter winogradskyi (strain ATCC 25391 / DSM 10237 / CIP 104748 / NCIMB 11846 / Nb-255).